A 79-amino-acid polypeptide reads, in one-letter code: Sec-independent protein translocase protein TatA (79 aa).

A helical membrane pass occupies residues 1–21 (MGSLSIWHWIVVIAVVLLLFG). Basic and acidic residues predominate over residues 43 to 60 (LQDDEKTAEKPDPVKSID). The segment at 43-79 (LQDDEKTAEKPDPVKSIDHNAPTAAAPTRTDVGSKAV) is disordered.

Belongs to the TatA/E family. As to quaternary structure, the Tat system comprises two distinct complexes: a TatABC complex, containing multiple copies of TatA, TatB and TatC subunits, and a separate TatA complex, containing only TatA subunits. Substrates initially bind to the TatABC complex, which probably triggers association of the separate TatA complex to form the active translocon.

The protein localises to the cell inner membrane. Part of the twin-arginine translocation (Tat) system that transports large folded proteins containing a characteristic twin-arginine motif in their signal peptide across membranes. TatA could form the protein-conducting channel of the Tat system. This is Sec-independent protein translocase protein TatA from Rhodopseudomonas palustris (strain BisB5).